We begin with the raw amino-acid sequence, 246 residues long: Large ribosomal subunit protein uL3 (246 aa).

Disordered regions lie at residues 140–162 (SHRS…NKKM) and 215–246 (DVPL…EENA). Residue Gln-151 is modified to N5-methylglutamine. Positions 234-246 (EAAPEAPASEENA) are enriched in low complexity.

The protein belongs to the universal ribosomal protein uL3 family. In terms of assembly, part of the 50S ribosomal subunit. Forms a cluster with proteins L14 and L19. In terms of processing, methylated by PrmB.

In terms of biological role, one of the primary rRNA binding proteins, it binds directly near the 3'-end of the 23S rRNA, where it nucleates assembly of the 50S subunit. In Methylorubrum populi (strain ATCC BAA-705 / NCIMB 13946 / BJ001) (Methylobacterium populi), this protein is Large ribosomal subunit protein uL3.